Consider the following 477-residue polypeptide: Interferon gamma receptor 1 (477 aa).

A signal peptide spans 1 to 25 (MGPQAAAGRMILLVVLMLSAKVGSG). Topologically, residues 26–254 (ALTSTEDPEP…PPFHDDRKDS (229 aa)) are extracellular. N61 and N85 each carry an N-linked (GlcNAc...) asparagine glycan. 4 disulfide bridges follow: C83–C91, C128–C174, C203–C208, and C222–C243. The chain crosses the membrane as a helical span at residues 255–275 (IWILVVAPLTVFTVVILVFAY). At 276–477 (WYTKKNSFKR…RLTGEAQELS (202 aa)) the chain is on the cytoplasmic side. Disordered regions lie at residues 335-386 (TVTA…LSSN) and 402-446 (SDSG…SGYD). S362 is modified (phosphoserine). T367 is modified (phosphothreonine). S370 carries the post-translational modification Phosphoserine. A phosphothreonine mark is found at T373 and T375. Over residues 375-386 (TQRRSFSLLSSN) the composition is skewed to polar residues. A phosphoserine mark is found at S379 and S402. A compositionally biased stretch (low complexity) spans 402-416 (SDSGLVGSGSSISDL). Position 445 is a phosphotyrosine (Y445).

This sequence belongs to the type II cytokine receptor family. Monomer. Heterodimer with IFNGR2, to form the IFNG receptor complex. Interacts with JAK1. Interacts (when phosphorylated) with STAT1. Interacts with SOCS1. Phosphorylated at Ser/Thr residues. Phosphorylation of Tyr-445 is required for IFNG receptor signal transduction. Influenza virus infection leads to phosphorylation in a CSNK1A1-dependent manner. In terms of processing, ubiquitinated after phosphorylation in a CSNK1A1-dependent manner, leading to the lysosome-dependent degradation. Proteasomally degraded through 'Lys-48'-mediated ubiquitination. Ubiquitination is necessary for efficient IFNGR1 signaling.

Its subcellular location is the cell membrane. Its function is as follows. Receptor subunit for interferon gamma/INFG that plays crucial roles in antimicrobial, antiviral, and antitumor responses by activating effector immune cells and enhancing antigen presentation (, PubMed:20926559, PubMed:27286456). Associates with transmembrane accessory factor IFNGR2 to form a functional receptor. Upon ligand binding, the intracellular domain of IFNGR1 opens out to allow association of downstream signaling components JAK1 and JAK2. In turn, activated JAK1 phosphorylates IFNGR1 to form a docking site for STAT1. Subsequent phosphorylation of STAT1 leads to its dimerization, translocation to the nucleus, and stimulation of target gene transcription. STAT3 can also be activated in a similar manner although activation seems weaker. IFNGR1 intracellular domain phosphorylation also provides a docking site for SOCS1 that regulates the JAK-STAT pathway by competing with STAT1 binding to IFNGR1. The polypeptide is Interferon gamma receptor 1 (Mus musculus (Mouse)).